The following is a 253-amino-acid chain: Amino-acid-binding protein AabA (253 aa).

A signal peptide spans 1–23; it reads MPFLKTLFRGALCSIACGASLFC.

Belongs to the bacterial solute-binding protein 3 family.

It localises to the periplasm. The sequence is that of Amino-acid-binding protein AabA (aabA) from Dichelobacter nodosus (Bacteroides nodosus).